The primary structure comprises 166 residues: Cyclic pyranopterin monophosphate synthase (166 aa).

Substrate-binding positions include 75 to 77 (LCH) and 113 to 114 (ME). Asp-128 is an active-site residue.

Belongs to the MoaC family. Homohexamer; trimer of dimers.

It catalyses the reaction (8S)-3',8-cyclo-7,8-dihydroguanosine 5'-triphosphate = cyclic pyranopterin phosphate + diphosphate. The protein operates within cofactor biosynthesis; molybdopterin biosynthesis. Catalyzes the conversion of (8S)-3',8-cyclo-7,8-dihydroguanosine 5'-triphosphate to cyclic pyranopterin monophosphate (cPMP). The polypeptide is Cyclic pyranopterin monophosphate synthase (Thermomicrobium roseum (strain ATCC 27502 / DSM 5159 / P-2)).